The primary structure comprises 406 residues: Probable transcription factor FPSE_09188 (406 aa).

The disordered stretch occupies residues 1-72 (MELPTYAVSQ…PKGSSSRCNG (72 aa)). The segment covering 7-20 (AVSQSLLASRSVSS) has biased composition (low complexity).

It belongs to the bZIP family.

The protein localises to the nucleus. The two putative transcription factors FPSE_09188 and FPSE_09189 could be responsible for orchestrating expression of the W493 A and B biosynthesis cluster genes. W493 A and B consist of six amino acid residues D-allo-thr, L-Ala, D-Ala, L-Gln, D-Tyr, and L-Val/L-Ile linked to a 3-hydroxy-4-methyltetradecanoic acid polyketide chain. The chain is Probable transcription factor FPSE_09188 from Fusarium pseudograminearum (strain CS3096) (Wheat and barley crown-rot fungus).